Reading from the N-terminus, the 662-residue chain is uncharacterized protein (662 aa).

FAD is bound by residues S145, E164, W173, D184, and Y190. A disordered region spans residues 638-662 (SRLETSGVPREGVQRPGSRLRRRPS).

This sequence belongs to the FAD-binding monooxygenase family. FAD serves as cofactor.

This is an uncharacterized protein from Sinorhizobium fredii (strain NBRC 101917 / NGR234).